A 632-amino-acid chain; its full sequence is 1-deoxy-D-xylulose-5-phosphate synthase (632 aa).

Thiamine diphosphate contacts are provided by residues His-75 and 117-119 (GHA). Position 146 (Asp-146) interacts with Mg(2+). Residues 147–148 (AA), Asn-175, and Glu-370 contribute to the thiamine diphosphate site. Position 175 (Asn-175) interacts with Mg(2+).

Belongs to the transketolase family. DXPS subfamily. In terms of assembly, homodimer. Requires Mg(2+) as cofactor. Thiamine diphosphate is required as a cofactor.

The catalysed reaction is D-glyceraldehyde 3-phosphate + pyruvate + H(+) = 1-deoxy-D-xylulose 5-phosphate + CO2. Its pathway is metabolic intermediate biosynthesis; 1-deoxy-D-xylulose 5-phosphate biosynthesis; 1-deoxy-D-xylulose 5-phosphate from D-glyceraldehyde 3-phosphate and pyruvate: step 1/1. Its function is as follows. Catalyzes the acyloin condensation reaction between C atoms 2 and 3 of pyruvate and glyceraldehyde 3-phosphate to yield 1-deoxy-D-xylulose-5-phosphate (DXP). The polypeptide is 1-deoxy-D-xylulose-5-phosphate synthase (Chlamydia muridarum (strain MoPn / Nigg)).